A 238-amino-acid chain; its full sequence is Probable transcriptional regulatory protein IL0164 (238 aa).

It belongs to the TACO1 family.

It localises to the cytoplasm. The polypeptide is Probable transcriptional regulatory protein IL0164 (Idiomarina loihiensis (strain ATCC BAA-735 / DSM 15497 / L2-TR)).